Reading from the N-terminus, the 181-residue chain is MASAGSGMEEVRVSVLTPLKLVGLVCIFLALCLDLGAVLSPAWVTADHQYYLSLWESCRKPASLDIWHCESTLSSDWQIATLALLLGGAAIILIAFLVGLISICVGSRRRFYRPVAVMLFAAVVLQVCSLVLYPIKFIETVSLKIYHEFNWGYGLAWGATIFSFGGAILYCLNPKNYEDYY.

A2 is modified (N-acetylalanine). 4 helical membrane passes run L21 to P41, A83 to I103, V115 to I135, and G152 to L172.

The protein belongs to the TMEM47 family. As to quaternary structure, interacts with CTNNB1, CTNNA1, PRKCI, PARD6B, FYB1. As to expression, expressed in adult brain, fetal brain, cerebellum, heart, lung, prostate and thyroid.

It is found in the membrane. The protein localises to the cell junction. It localises to the adherens junction. Regulates cell junction organization in epithelial cells. May play a role in the transition from adherens junction to tight junction assembly. May regulate F-actin polymerization required for tight junctional localization dynamics and affect the junctional localization of PARD6B. During podocyte differentiation may negatively regulate activity of FYN and subsequently the abundance of nephrin. The polypeptide is Transmembrane protein 47 (TMEM47) (Homo sapiens (Human)).